Consider the following 355-residue polypeptide: UDP-N-acetylglucosamine--N-acetylmuramyl-(pentapeptide) pyrophosphoryl-undecaprenol N-acetylglucosamine transferase (355 aa).

UDP-N-acetyl-alpha-D-glucosamine contacts are provided by residues 15–17, asparagine 127, arginine 163, serine 191, isoleucine 244, 263–268, and glutamine 288; these read TGG and ALTVSE.

Belongs to the glycosyltransferase 28 family. MurG subfamily.

The protein localises to the cell inner membrane. It carries out the reaction di-trans,octa-cis-undecaprenyl diphospho-N-acetyl-alpha-D-muramoyl-L-alanyl-D-glutamyl-meso-2,6-diaminopimeloyl-D-alanyl-D-alanine + UDP-N-acetyl-alpha-D-glucosamine = di-trans,octa-cis-undecaprenyl diphospho-[N-acetyl-alpha-D-glucosaminyl-(1-&gt;4)]-N-acetyl-alpha-D-muramoyl-L-alanyl-D-glutamyl-meso-2,6-diaminopimeloyl-D-alanyl-D-alanine + UDP + H(+). The protein operates within cell wall biogenesis; peptidoglycan biosynthesis. Its function is as follows. Cell wall formation. Catalyzes the transfer of a GlcNAc subunit on undecaprenyl-pyrophosphoryl-MurNAc-pentapeptide (lipid intermediate I) to form undecaprenyl-pyrophosphoryl-MurNAc-(pentapeptide)GlcNAc (lipid intermediate II). The sequence is that of UDP-N-acetylglucosamine--N-acetylmuramyl-(pentapeptide) pyrophosphoryl-undecaprenol N-acetylglucosamine transferase from Escherichia coli (strain K12 / MC4100 / BW2952).